The sequence spans 37 residues: Photosystem II reaction center protein T (37 aa).

The helical transmembrane segment at 3–23 threads the bilayer; sequence ALVYTFLLVGTLGIIFFAIFF.

This sequence belongs to the PsbT family. PSII is composed of 1 copy each of membrane proteins PsbA, PsbB, PsbC, PsbD, PsbE, PsbF, PsbH, PsbI, PsbJ, PsbK, PsbL, PsbM, PsbT, PsbY, PsbZ, Psb30/Ycf12, at least 3 peripheral proteins of the oxygen-evolving complex and a large number of cofactors. It forms dimeric complexes.

The protein localises to the plastid. It is found in the chloroplast thylakoid membrane. In terms of biological role, found at the monomer-monomer interface of the photosystem II (PS II) dimer, plays a role in assembly and dimerization of PSII. PSII is a light-driven water plastoquinone oxidoreductase, using light energy to abstract electrons from H(2)O, generating a proton gradient subsequently used for ATP formation. This Spirogyra maxima (Green alga) protein is Photosystem II reaction center protein T.